The following is a 337-amino-acid chain: NADH-quinone oxidoreductase subunit H (337 aa).

The next 9 membrane-spanning stretches (helical) occupy residues 9–29 (GIPL…LLLV), 50–70 (PNVV…KFVF), 82–102 (GIFL…WAVI), 115–135 (VGIL…IMAG), 161–181 (IGFV…TAIV), 186–206 (TIWY…SALA), 245–265 (SILL…LPPI), 273–293 (VPGV…FAMV), and 313–333 (FLPI…GFDI).

Belongs to the complex I subunit 1 family. As to quaternary structure, NDH-1 is composed of 14 different subunits. Subunits NuoA, H, J, K, L, M, N constitute the membrane sector of the complex.

The protein resides in the cell inner membrane. The catalysed reaction is a quinone + NADH + 5 H(+)(in) = a quinol + NAD(+) + 4 H(+)(out). Its function is as follows. NDH-1 shuttles electrons from NADH, via FMN and iron-sulfur (Fe-S) centers, to quinones in the respiratory chain. The immediate electron acceptor for the enzyme in this species is believed to be ubiquinone. Couples the redox reaction to proton translocation (for every two electrons transferred, four hydrogen ions are translocated across the cytoplasmic membrane), and thus conserves the redox energy in a proton gradient. This subunit may bind ubiquinone. This Parvibaculum lavamentivorans (strain DS-1 / DSM 13023 / NCIMB 13966) protein is NADH-quinone oxidoreductase subunit H.